Here is a 146-residue protein sequence, read N- to C-terminus: Ubiquitin-conjugating enzyme E2 variant 1D (146 aa).

Positions 13 to 146 constitute a UBC core domain; that stretch reads PRNFRLLEEL…LVQPPEGTCF (134 aa).

Belongs to the ubiquitin-conjugating enzyme family. As to quaternary structure, heterodimer with UBC35 or UBC36. In terms of tissue distribution, expressed in roots, shoots, leaves, stems, flowers and pollen.

Has no ubiquitin ligase activity on its own. The heterodimer with UBC catalyzes the synthesis of non-canonical poly-ubiquitin chains that are linked through 'Lys-63'. This type of poly-ubiquitination does not lead to protein degradation by the proteasome. Mediates transcriptional activation of target genes. May play a role in the control of progress through the cell cycle and differentiation. Involved in the error-free DNA repair pathway and contributes to the survival of cells after DNA damage. The sequence is that of Ubiquitin-conjugating enzyme E2 variant 1D (UEV1D) from Arabidopsis thaliana (Mouse-ear cress).